A 334-amino-acid chain; its full sequence is MIEADRLIAPISNHFKDEEVIDRAIRPKKLADYQGQDHVRDQMEIFIQAAQMRQEALDHLLIFGPPGLGKTTLANIVANEMGVNIRTTSGPVLEKAGDLAALLTNLEENDVLFIDEIHRLSPMVEEVLYPAMEDYQLDIMIGEGPAARSIKIDLPPFTLIGATTRAGSLTSPLRDRFGIVQRLEYYKVADLQHIVQRSAQCLGLSMDSEGALEVARRARGTPRIANRLLRRVRDYAEVKGDGHICAQTADRALNMLDVDHQGFDYMDRKLLLAIMEKFSGGPVGIDNLAAAIGEEKDTIEDVLEPFLIQQGYLQRTPRGRIATDRAYLHFGIEK.

The interval 4-186 (ADRLIAPISN…FGIVQRLEYY (183 aa)) is large ATPase domain (RuvB-L). Residues Ile25, Arg26, Gly67, Lys70, Thr71, Thr72, 133–135 (EDY), Arg176, Tyr186, and Arg223 each bind ATP. Residue Thr71 coordinates Mg(2+). Residues 187–257 (KVADLQHIVQ…TADRALNMLD (71 aa)) are small ATPAse domain (RuvB-S). The interval 260-334 (HQGFDYMDRK…RAYLHFGIEK (75 aa)) is head domain (RuvB-H). The DNA site is built by Arg315 and Arg320.

The protein belongs to the RuvB family. Homohexamer. Forms an RuvA(8)-RuvB(12)-Holliday junction (HJ) complex. HJ DNA is sandwiched between 2 RuvA tetramers; dsDNA enters through RuvA and exits via RuvB. An RuvB hexamer assembles on each DNA strand where it exits the tetramer. Each RuvB hexamer is contacted by two RuvA subunits (via domain III) on 2 adjacent RuvB subunits; this complex drives branch migration. In the full resolvosome a probable DNA-RuvA(4)-RuvB(12)-RuvC(2) complex forms which resolves the HJ.

The protein localises to the cytoplasm. The enzyme catalyses ATP + H2O = ADP + phosphate + H(+). The RuvA-RuvB-RuvC complex processes Holliday junction (HJ) DNA during genetic recombination and DNA repair, while the RuvA-RuvB complex plays an important role in the rescue of blocked DNA replication forks via replication fork reversal (RFR). RuvA specifically binds to HJ cruciform DNA, conferring on it an open structure. The RuvB hexamer acts as an ATP-dependent pump, pulling dsDNA into and through the RuvAB complex. RuvB forms 2 homohexamers on either side of HJ DNA bound by 1 or 2 RuvA tetramers; 4 subunits per hexamer contact DNA at a time. Coordinated motions by a converter formed by DNA-disengaged RuvB subunits stimulates ATP hydrolysis and nucleotide exchange. Immobilization of the converter enables RuvB to convert the ATP-contained energy into a lever motion, pulling 2 nucleotides of DNA out of the RuvA tetramer per ATP hydrolyzed, thus driving DNA branch migration. The RuvB motors rotate together with the DNA substrate, which together with the progressing nucleotide cycle form the mechanistic basis for DNA recombination by continuous HJ branch migration. Branch migration allows RuvC to scan DNA until it finds its consensus sequence, where it cleaves and resolves cruciform DNA. The chain is Holliday junction branch migration complex subunit RuvB from Vibrio cholerae serotype O1 (strain ATCC 39315 / El Tor Inaba N16961).